The chain runs to 730 residues: Elongation factor 2 (730 aa).

The tr-type G domain occupies 18–238 (DQIRNFGVIA…YSEGKVDELV (221 aa)). GTP-binding positions include 27-34 (AHVDHGKT), 93-97 (DTPGH), and 147-150 (NKVD). Residue His595 is modified to Diphthamide. The disordered stretch occupies residues 711 to 730 (RKRKGLAPDPPTVSEFIDRE).

It belongs to the TRAFAC class translation factor GTPase superfamily. Classic translation factor GTPase family. EF-G/EF-2 subfamily.

The protein resides in the cytoplasm. In terms of biological role, catalyzes the GTP-dependent ribosomal translocation step during translation elongation. During this step, the ribosome changes from the pre-translocational (PRE) to the post-translocational (POST) state as the newly formed A-site-bound peptidyl-tRNA and P-site-bound deacylated tRNA move to the P and E sites, respectively. Catalyzes the coordinated movement of the two tRNA molecules, the mRNA and conformational changes in the ribosome. This chain is Elongation factor 2, found in Cenarchaeum symbiosum (strain A).